Consider the following 122-residue polypeptide: Large ribosomal subunit protein uL14 (122 aa).

This sequence belongs to the universal ribosomal protein uL14 family. As to quaternary structure, part of the 50S ribosomal subunit. Forms a cluster with proteins L3 and L19. In the 70S ribosome, L14 and L19 interact and together make contacts with the 16S rRNA in bridges B5 and B8.

Binds to 23S rRNA. Forms part of two intersubunit bridges in the 70S ribosome. The sequence is that of Large ribosomal subunit protein uL14 from Renibacterium salmoninarum (strain ATCC 33209 / DSM 20767 / JCM 11484 / NBRC 15589 / NCIMB 2235).